The sequence spans 340 residues: Ketol-acid reductoisomerase (NADP(+)) (340 aa).

Residues 1–183 (MAITVYYDKD…GGGRTGIIET (183 aa)) enclose the KARI N-terminal Rossmann domain. NADP(+) contacts are provided by residues 26 to 29 (FGSQ), Arg49, Ser52, Ser54, and 84 to 87 (DEIQ). His109 is an active-site residue. Position 135 (Gly135) interacts with NADP(+). The region spanning 184–329 (TFKAETETDL…RNLRAMMPWI (146 aa)) is the KARI C-terminal knotted domain. Residues Asp192, Glu196, Glu228, and Glu232 each contribute to the Mg(2+) site. Residue Ser253 coordinates substrate.

This sequence belongs to the ketol-acid reductoisomerase family. Mg(2+) is required as a cofactor.

The enzyme catalyses (2R)-2,3-dihydroxy-3-methylbutanoate + NADP(+) = (2S)-2-acetolactate + NADPH + H(+). It catalyses the reaction (2R,3R)-2,3-dihydroxy-3-methylpentanoate + NADP(+) = (S)-2-ethyl-2-hydroxy-3-oxobutanoate + NADPH + H(+). Its pathway is amino-acid biosynthesis; L-isoleucine biosynthesis; L-isoleucine from 2-oxobutanoate: step 2/4. It functions in the pathway amino-acid biosynthesis; L-valine biosynthesis; L-valine from pyruvate: step 2/4. Its function is as follows. Involved in the biosynthesis of branched-chain amino acids (BCAA). Catalyzes an alkyl-migration followed by a ketol-acid reduction of (S)-2-acetolactate (S2AL) to yield (R)-2,3-dihydroxy-isovalerate. In the isomerase reaction, S2AL is rearranged via a Mg-dependent methyl migration to produce 3-hydroxy-3-methyl-2-ketobutyrate (HMKB). In the reductase reaction, this 2-ketoacid undergoes a metal-dependent reduction by NADPH to yield (R)-2,3-dihydroxy-isovalerate. The chain is Ketol-acid reductoisomerase (NADP(+)) from Campylobacter jejuni subsp. jejuni serotype O:6 (strain 81116 / NCTC 11828).